Consider the following 537-residue polypeptide: Cytochrome P450 monooxygenase yanC (537 aa).

An N-terminal signal peptide occupies residues 1 to 21 (MALVHLTALAACGLLLVILRA). Cys-449 serves as a coordination point for heme.

It belongs to the cytochrome P450 family. It depends on heme as a cofactor.

Its pathway is secondary metabolite biosynthesis; terpenoid biosynthesis. Cytochrome P450 monooxygenase; part of the gene cluster that mediates the biosynthesis of yanuthone D, a fungal isoprenoid epoxycyclohexenone that acts as an antibiotic against fungi and bacteria. The first step of the pathway is the synthesis of 6-methylsalicylic acid (6-MSA) by the polyketide synthase yanA. 6-MSA is then converted to m-cresol by the decarboxylase yanB. The cytochrome P450 monooxygenase yanC then catalyzes the oxidation of m-cresol to toluquinol. Epoxidation of toluquinol is then performed by the short chain dehydrogenase yanD, with the help of yanE, and a further prenylation by yanG leads to 7-deacetoxyyanuthone A. The next step is the hydroxylation of C-22 of 7-deacetoxyyanuthone A by the cytochrome P450 monooxygenase yanH to yield 22-deacetylyanuthone A. O-Mevalon transferase yanI then attaches mevalon to the hydroxyl group of 22-deacetylyanuthone A to produce yanuthone E. Finally, the FAD-dependent monooxygenase yanF oxidizes the hydroxyl group at C15 of yanuthone E to form yanuthone D. Furthermore, several branching points in the pathway lead to the production of yanuthones F and G from 7-deacetoxyyanuthone A; yanuthones H and I from 22-deacetylyanuthone A; and yanuthone J from yanuthone E. YanC is also involved in the synthesis of yanuthone X1 which does not have 6-methylsalicylic acid (6-MSA) as precursor. The chain is Cytochrome P450 monooxygenase yanC from Aspergillus niger (strain ATCC 1015 / CBS 113.46 / FGSC A1144 / LSHB Ac4 / NCTC 3858a / NRRL 328 / USDA 3528.7).